The following is a 353-amino-acid chain: Photosystem II D2 protein (353 aa).

N-acetylthreonine is present on Thr2. At Thr2 the chain carries Phosphothreonine. The helical transmembrane segment at 41–61 (CAYFALGGWFTGTTFVTSWYT) threads the bilayer. A chlorophyll a-binding site is contributed by His118. The chain crosses the membrane as a helical span at residues 125–141 (GFMLRQFELARSVQLRP). Residues Gln130 and Asn143 each coordinate pheophytin a. The helical transmembrane segment at 153–166 (VFVSVFLIYPLGQS) threads the bilayer. Chlorophyll a is bound at residue His198. A helical transmembrane segment spans residues 208 to 228 (AALLCAIHGATVENTLFEDGD). Residues His215 and Phe262 each coordinate a plastoquinone. His215 contributes to the Fe cation binding site. Residue His269 coordinates Fe cation. The helical transmembrane segment at 279-295 (GLWMSALGVVGLALNLR) threads the bilayer.

This sequence belongs to the reaction center PufL/M/PsbA/D family. In terms of assembly, PSII is composed of 1 copy each of membrane proteins PsbA, PsbB, PsbC, PsbD, PsbE, PsbF, PsbH, PsbI, PsbJ, PsbK, PsbL, PsbM, PsbT, PsbX, PsbY, PsbZ, Psb30/Ycf12, at least 3 peripheral proteins of the oxygen-evolving complex and a large number of cofactors. It forms dimeric complexes. The D1/D2 heterodimer binds P680, chlorophylls that are the primary electron donor of PSII, and subsequent electron acceptors. It shares a non-heme iron and each subunit binds pheophytin, quinone, additional chlorophylls, carotenoids and lipids. There is also a Cl(-1) ion associated with D1 and D2, which is required for oxygen evolution. The PSII complex binds additional chlorophylls, carotenoids and specific lipids. is required as a cofactor.

It is found in the plastid. The protein localises to the chloroplast thylakoid membrane. It carries out the reaction 2 a plastoquinone + 4 hnu + 2 H2O = 2 a plastoquinol + O2. Functionally, photosystem II (PSII) is a light-driven water:plastoquinone oxidoreductase that uses light energy to abstract electrons from H(2)O, generating O(2) and a proton gradient subsequently used for ATP formation. It consists of a core antenna complex that captures photons, and an electron transfer chain that converts photonic excitation into a charge separation. The D1/D2 (PsbA/PsbD) reaction center heterodimer binds P680, the primary electron donor of PSII as well as several subsequent electron acceptors. D2 is needed for assembly of a stable PSII complex. This chain is Photosystem II D2 protein, found in Morus indica (Mulberry).